The chain runs to 359 residues: Phospho-N-acetylmuramoyl-pentapeptide-transferase (359 aa).

10 consecutive transmembrane segments (helical) span residues 3–23, 55–75, 80–100, 117–137, 156–176, 187–207, 231–251, 255–275, 280–300, and 334–354; these read LILI…PALI, VAIL…GMAM, PSAS…VGFI, TAKT…ALQF, IATV…VVSA, LDGL…LITF, LALV…WNAA, IFMG…ISVT, ILAV…VVQI, and FWLL…GEWL.

This sequence belongs to the glycosyltransferase 4 family. MraY subfamily. The cofactor is Mg(2+).

It localises to the cell membrane. It catalyses the reaction UDP-N-acetyl-alpha-D-muramoyl-L-alanyl-gamma-D-glutamyl-meso-2,6-diaminopimeloyl-D-alanyl-D-alanine + di-trans,octa-cis-undecaprenyl phosphate = di-trans,octa-cis-undecaprenyl diphospho-N-acetyl-alpha-D-muramoyl-L-alanyl-D-glutamyl-meso-2,6-diaminopimeloyl-D-alanyl-D-alanine + UMP. The protein operates within cell wall biogenesis; peptidoglycan biosynthesis. In terms of biological role, catalyzes the initial step of the lipid cycle reactions in the biosynthesis of the cell wall peptidoglycan: transfers peptidoglycan precursor phospho-MurNAc-pentapeptide from UDP-MurNAc-pentapeptide onto the lipid carrier undecaprenyl phosphate, yielding undecaprenyl-pyrophosphoryl-MurNAc-pentapeptide, known as lipid I. The protein is Phospho-N-acetylmuramoyl-pentapeptide-transferase of Mycolicibacterium smegmatis (strain ATCC 700084 / mc(2)155) (Mycobacterium smegmatis).